Consider the following 468-residue polypeptide: MSFRLSGGSRRICSRTGSGRLSGGGTGFVAGNVCVGSGARSSFSCTLEGISSGGSFCNSGGGLGSGACAGFLGNEHSLLSGNEKVTMQNLNDRLASYLDHVHALEEANADLEQKIKGWYEKCEPGSSREHDHDYSRYFSVIEDLKRQIISATICNASIVLQNDNARLTADDFRLKYENELALHHSVEADTSGLRRVLDELTLCTTDLEIQCETLSEELTYLKKSHEEEMEVLQYTAGGNVNVEMNATPGVDLTVLLNNMRAEYEDLAEQNRKDAEAWFNERSATLQQQISDHEGAATAARNELTELKRNLQTLEIELQSLMAVKHSYECSLAETEGNYCNQLQQIQDQIGVMEEQLQQIRTETEGQKLEYEQLLDVKIFLEKEIDIYCNLLDGEERKSKSTCYKSKGYRPVNSGNQAKDSTEETIVKTVVEELDQIGNLLSLRVHSVEEKSSKISNITVEQRVPSKAP.

The segment at 1 to 82 (MSFRLSGGSR…GNEHSLLSGN (82 aa)) is head. Residues 83 to 118 (EKVTMQNLNDRLASYLDHVHALEEANADLEQKIKGW) form a coil 1A region. Positions 83–398 (EKVTMQNLND…NLLDGEERKS (316 aa)) constitute an IF rod domain. The segment at 119–140 (YEKCEPGSSREHDHDYSRYFSV) is linker 1. The tract at residues 141-232 (IEDLKRQIIS…KSHEEEMEVL (92 aa)) is coil 1B. Residues 233–255 (QYTAGGNVNVEMNATPGVDLTVL) form a linker 12 region. Residues 256 to 394 (LNNMRAEYED…DIYCNLLDGE (139 aa)) are coil 2. A tail region spans residues 395–465 (ERKSKSTCYK…NITVEQRVPS (71 aa)).

It belongs to the intermediate filament family. As to quaternary structure, heterotetramer of two type I and two type II keratins. Strongly expressed in skin and scalp, and weak expression observed in thymus and tongue. In the hair follicle, expression is restricted to the mid- to upper inner root sheath cuticle, being present slightly above the apex of the dermal papilla (at protein level).

This Homo sapiens (Human) protein is Keratin, type I cytoskeletal 26.